The chain runs to 87 residues: Large ribosomal subunit protein bL27 (87 aa).

Positions 1–11 are enriched in polar residues; sequence MASKASGGSTR. A disordered region spans residues 1 to 21; that stretch reads MASKASGGSTRNGRDSNSKRL.

The protein belongs to the bacterial ribosomal protein bL27 family.

This Hydrogenobaculum sp. (strain Y04AAS1) protein is Large ribosomal subunit protein bL27.